The sequence spans 692 residues: MERPNSRLHCHPETHTYKCTVQPYFPLHTHATTVYGNVTKHRPSLGTLQAGDTLHARRFLSDKRRSYRNRSLGPTIASAPSVEQEDYRTPRPSFDSNGYVGKSFDFSSAQHGLTASESNALVKVSADFLRLNGSRQQFKNLLSARKKLGSLPPAYTRIDYSRESLDSHSARGIPNHHGPVITVEDTGSQLRINNIKPSVNQHLLESSCSFEKTMVTQCESNGSVTSHNTSSAFQRNNSRYGVPIDSTAVKQVYRVRSERLTNRVRITDRSLYLALFGVILMLVESEITAEKFYGVSKTHWISQSLRVGVTCSTIALLYHIILYHLNDIVLELVDCGADDWRVVVTTERVIQFCIEFICCGICPLPGSGEMKWTFIEPSLHKDGPSEERTVQTRNVDVPVDVILSCFMLCRSYLFARFMVLHSKQFQDASTRTLAALNRIQVNFSFVIKTSLDQQPVLFLTTFTFIFWIIMSWMFVQCERYGFSGKNPQSILYSNSLWFIAITFMLNGYGDIVPQTNAGRFIAIFVGVVGAVISSILIAVISRNILLSQGQRNVNNFMYDSKLAREHKEAAARVLQHTWHIHKCLQGSDGGNRRLRTYQRKFLKAIHKFRSVKSEMREFSENNSQNNPQMTRLVTDMHTSMQRLLNVQDEMRMQIEVLQQSVRNHYMHSTPNVPHLQGLTSSPVPSDRYDNRF.

Residues 270–290 (SLYLALFGVILMLVESEITAE) form a helical membrane-spanning segment. The helical transmembrane segment at 313-333 (TIALLYHIILYHLNDIVLELV) threads the bilayer. The chain crosses the membrane as a helical span at residues 349 to 369 (VIQFCIEFICCGICPLPGSGE). A helical transmembrane segment spans residues 401–421 (VILSCFMLCRSYLFARFMVLH). Residues 455–475 (PVLFLTTFTFIFWIIMSWMFV) form a helical membrane-spanning segment. The segment at residues 492-512 (YSNSLWFIAITFMLNGYGDIV) is an intramembrane region (pore-forming). Residues 520-540 (FIAIFVGVVGAVISSILIAVI) form a helical membrane-spanning segment. Residues 667–683 (HSTPNVPHLQGLTSSPV) show a composition bias toward polar residues. Positions 667 to 692 (HSTPNVPHLQGLTSSPVPSDRYDNRF) are disordered.

It belongs to the potassium channel KCNN family. SK subfamily. In terms of assembly, heterooligomer.

The protein resides in the membrane. In terms of biological role, forms a voltage-independent potassium channel activated by intracellular calcium. This Caenorhabditis elegans protein is Small conductance calcium-activated potassium channel-like protein 3 (kcnl-3).